Reading from the N-terminus, the 694-residue chain is DNA ligase (694 aa).

NAD(+)-binding positions include 41-45 (DAEFD), 91-92 (SL), and Glu-121. The active-site N6-AMP-lysine intermediate is Lys-123. NAD(+) contacts are provided by Arg-144, Glu-184, Lys-300, and Lys-324. Zn(2+) contacts are provided by Cys-418, Cys-421, Cys-437, and Cys-443. The BRCT domain maps to 607–694 (SVLPTCEGLT…QGPPVQQVVD (88 aa)).

Belongs to the NAD-dependent DNA ligase family. LigA subfamily. It depends on Mg(2+) as a cofactor. Mn(2+) is required as a cofactor.

The catalysed reaction is NAD(+) + (deoxyribonucleotide)n-3'-hydroxyl + 5'-phospho-(deoxyribonucleotide)m = (deoxyribonucleotide)n+m + AMP + beta-nicotinamide D-nucleotide.. In terms of biological role, DNA ligase that catalyzes the formation of phosphodiester linkages between 5'-phosphoryl and 3'-hydroxyl groups in double-stranded DNA using NAD as a coenzyme and as the energy source for the reaction. It is essential for DNA replication and repair of damaged DNA. The polypeptide is DNA ligase (Mycobacterium leprae (strain TN)).